The primary structure comprises 310 residues: Protoheme IX farnesyltransferase (310 aa).

Helical transmembrane passes span 31-51 (VIEL…RGSV), 53-73 (PLLI…ANTL), 102-122 (NALI…WGTS), 124-144 (LLSG…YTLL), 149-169 (TSQN…IGWS), 170-190 (AVTG…FFWT), 242-262 (LATG…FLVM), and 289-309 (LAVV…TLLG).

The protein belongs to the UbiA prenyltransferase family. Protoheme IX farnesyltransferase subfamily.

Its subcellular location is the cell membrane. It catalyses the reaction heme b + (2E,6E)-farnesyl diphosphate + H2O = Fe(II)-heme o + diphosphate. It functions in the pathway porphyrin-containing compound metabolism; heme O biosynthesis; heme O from protoheme: step 1/1. In terms of biological role, converts heme B (protoheme IX) to heme O by substitution of the vinyl group on carbon 2 of heme B porphyrin ring with a hydroxyethyl farnesyl side group. The chain is Protoheme IX farnesyltransferase from Mycobacterium sp. (strain JLS).